Consider the following 416-residue polypeptide: Glutamate dehydrogenase (416 aa).

Lys105 is an active-site residue.

Belongs to the Glu/Leu/Phe/Val dehydrogenases family. As to quaternary structure, homohexamer.

It carries out the reaction L-glutamate + NAD(+) + H2O = 2-oxoglutarate + NH4(+) + NADH + H(+). The enzyme catalyses L-glutamate + NADP(+) + H2O = 2-oxoglutarate + NH4(+) + NADPH + H(+). The polypeptide is Glutamate dehydrogenase (gdhA) (Thermotoga maritima (strain ATCC 43589 / DSM 3109 / JCM 10099 / NBRC 100826 / MSB8)).